Here is an 854-residue protein sequence, read N- to C-terminus: Disrupted in schizophrenia 1 protein (854 aa).

Positions 1 to 18 (MPGGGPQGAPAAAGGGGV) are enriched in gly residues. Disordered stretches follow at residues 1–24 (MPGG…RAGS), 179–205 (SAEL…SHSA), 221–257 (GERG…GPHE), and 278–323 (AQAA…SGDA). The segment at 1 to 292 (MPGGGPQGAP…NSSRPERDMH (292 aa)) is interaction with MAP1A. The short motif at 197 to 203 (PTPPGSH) is the Interaction with FBXW7 element. Positions 285 to 295 (SRPERDMHSLP) are enriched in basic and acidic residues. The interval 293–696 (SLPDMDPGSS…LGKVWEADLE (404 aa)) is interaction with TRAF3IP1. Low complexity predominate over residues 296–309 (DMDPGSSSSLDPSL). Coiled-coil stretches lie at residues 366–394 (ENDD…HFQL), 452–505 (ITRR…CDLT), and 602–666 (WTAK…SVKE). Lys372 is covalently cross-linked (Glycyl lysine isopeptide (Lys-Gly) (interchain with G-Cter in ubiquitin)). The tract at residues 440–597 (LEPTAQDSLH…LLEAKMHAIS (158 aa)) is required for localization to punctate cytoplasmic foci. The tract at residues 446 to 854 (DSLHVSITRR…MTAGVHEAQA (409 aa)) is necessary and sufficient for interaction with PCNT and localization at the centrosome. Residues 598 to 854 (GNHFWTAKDL…MTAGVHEAQA (257 aa)) are interaction with ATF4 and ATF5. Residues 716-739 (VEDERQMDDLEGAAPPIPPRLHSE) are disordered. Residues 727–854 (GAAPPIPPRL…MTAGVHEAQA (128 aa)) are interaction with PAFAH1B1. A coiled-coil region spans residues 802 to 830 (SHDEDLIQSLRRELQMVKETLQAMILQLQ). An interaction with NDEL1 region spans residues 802–835 (SHDEDLIQSLRRELQMVKETLQAMILQLQPAKEA).

Interacts with NDEL1. Interacts with CCDC88A (via C-terminus); the interaction is direct. Interacts with GSK3B. Interacts with tubulin alpha, ACTN2, ANKHD1, ATF4, ATF5, CEP63, EIF3S3, MAP1A, NDEL1, PAFAH1B1, RANBP9, SPTBN4, SYNE1 and TRAF3IP1. Interaction with microtubules may be mediated in part by TRAF3IP1. Interacts (via C-terminal) with PCNT. Interacts with CHCHD6. Interacts with CCDC141. Interacts with FBXW7, the substrate-recognition component of a SCF (SKP1-CUL1-F-box protein) E3 ubiquitin-protein ligase complex; the interaction targets DISC1 for proteasomal degradation. Interacts with ZNF365. Interacts with ATF4; inhibiting ATF4 transcription factor activity by disrupting ATF4 dimerization and DNA-binding. Interacts with PDE4B (isoform PDE4B5). Ubiquitinated. Ubiquitination with 'Lys-48'-linked polyubiquitin chains leads to its proteasomal degradation. In terms of tissue distribution, ubiquitous. Highly expressed in the dentate gyrus of the hippocampus. Also expressed in the temporal and parahippocampal cortices and cells of the white matter.

The protein localises to the cytoplasm. The protein resides in the cytoskeleton. It localises to the mitochondrion. It is found in the microtubule organizing center. Its subcellular location is the centrosome. The protein localises to the postsynaptic density. Involved in the regulation of multiple aspects of embryonic and adult neurogenesis. Required for neural progenitor proliferation in the ventrical/subventrical zone during embryonic brain development and in the adult dentate gyrus of the hippocampus. Participates in the Wnt-mediated neural progenitor proliferation as a positive regulator by modulating GSK3B activity and CTNNB1 abundance. Plays a role as a modulator of the AKT-mTOR signaling pathway controlling the tempo of the process of newborn neurons integration during adult neurogenesis, including neuron positioning, dendritic development and synapse formation. Inhibits the activation of AKT-mTOR signaling upon interaction with CCDC88A. Regulates the migration of early-born granule cell precursors toward the dentate gyrus during the hippocampal development. Inhibits ATF4 transcription factor activity in neurons by disrupting ATF4 dimerization and DNA-binding. Plays a role, together with PCNT, in the microtubule network formation. The chain is Disrupted in schizophrenia 1 protein from Homo sapiens (Human).